The primary structure comprises 280 residues: Shikimate dehydrogenase (NADP(+)) (280 aa).

Shikimate is bound by residues 15–17 and threonine 62; that span reads SLS. The active-site Proton acceptor is lysine 66. 2 residues coordinate shikimate: asparagine 88 and aspartate 104. NADP(+) contacts are provided by residues 128-132, 151-156, and isoleucine 222; these read GAGGA and NRTEER. Residue tyrosine 224 participates in shikimate binding. Glycine 245 is an NADP(+) binding site.

The protein belongs to the shikimate dehydrogenase family. In terms of assembly, homodimer.

The enzyme catalyses shikimate + NADP(+) = 3-dehydroshikimate + NADPH + H(+). It participates in metabolic intermediate biosynthesis; chorismate biosynthesis; chorismate from D-erythrose 4-phosphate and phosphoenolpyruvate: step 4/7. Its function is as follows. Involved in the biosynthesis of the chorismate, which leads to the biosynthesis of aromatic amino acids. Catalyzes the reversible NADPH linked reduction of 3-dehydroshikimate (DHSA) to yield shikimate (SA). The polypeptide is Shikimate dehydrogenase (NADP(+)) (Methanosarcina mazei (strain ATCC BAA-159 / DSM 3647 / Goe1 / Go1 / JCM 11833 / OCM 88) (Methanosarcina frisia)).